The following is a 461-amino-acid chain: Fumarate hydratase class II (461 aa).

Residues 97–99 (SGT), 127–130 (HPND), 137–139 (SSN), and T185 each bind substrate. Catalysis depends on H186, which acts as the Proton donor/acceptor. The active site involves S316. Residues S317 and 322–324 (KVN) contribute to the substrate site.

The protein belongs to the class-II fumarase/aspartase family. Fumarase subfamily. As to quaternary structure, homotetramer.

It localises to the cytoplasm. The catalysed reaction is (S)-malate = fumarate + H2O. The protein operates within carbohydrate metabolism; tricarboxylic acid cycle; (S)-malate from fumarate: step 1/1. Functionally, involved in the TCA cycle. Catalyzes the stereospecific interconversion of fumarate to L-malate. In Staphylococcus aureus (strain MRSA252), this protein is Fumarate hydratase class II.